The following is a 433-amino-acid chain: Beta-agarase AgaA (433 aa).

The first 20 residues, 1 to 20 (MRKITSILLTCVMGCTATYA), serve as a signal peptide directing secretion. The GH16 domain maps to 21–295 (ADWDGVPVPA…WVRFYKPVPI (275 aa)). The active-site Nucleophile is E147. E152 functions as the Proton donor in the catalytic mechanism. Residues 300–431 (TTVELGNFHN…QWNGDEIRFV (132 aa)) form the CBM6 domain.

The protein belongs to the glycosyl hydrolase 16 family. As to quaternary structure, monomer.

Its subcellular location is the periplasm. It catalyses the reaction Hydrolysis of (1-&gt;4)-beta-D-galactosidic linkages in agarose, giving the tetramer as the predominant product.. Activity is abolished by Hg(2+), Cu(2+), Pb(2+) and Zn(2+) ions, but is not affected by NaCl up to at least 1.0 M, Mg(2+), K(+) and Ca(2+). Not affected by iodoacetamide, p-chloromercuribenzoate, dithiothreitol, 2-mercaptoethanol, EDTA and sodium dodecyl sulfate. Inhibited by N-bromosuccinimide. Endo-type beta-agarase, which produces neoagarotetraose (NA4) as the main final product, with a small amount of neoagarohexaose (NA6) and neoagarobiose (NA2). The protein is Beta-agarase AgaA of Microbulbifer thermotolerans.